A 440-amino-acid polypeptide reads, in one-letter code: Thymidine phosphorylase (440 aa).

This sequence belongs to the thymidine/pyrimidine-nucleoside phosphorylase family. Homodimer.

The catalysed reaction is thymidine + phosphate = 2-deoxy-alpha-D-ribose 1-phosphate + thymine. It functions in the pathway pyrimidine metabolism; dTMP biosynthesis via salvage pathway; dTMP from thymine: step 1/2. In terms of biological role, the enzymes which catalyze the reversible phosphorolysis of pyrimidine nucleosides are involved in the degradation of these compounds and in their utilization as carbon and energy sources, or in the rescue of pyrimidine bases for nucleotide synthesis. This is Thymidine phosphorylase from Shigella flexneri serotype 5b (strain 8401).